We begin with the raw amino-acid sequence, 354 residues long: Stimulator of interferon genes protein 3 (354 aa).

Transmembrane regions (helical) follow at residues 20–40, 48–68, 101–121, and 132–152; these read VTFA…FALW, INFV…GELI, YGSC…YALL, and YGIF…IVGI. Positions 178, 183, 250, 251, 253, 272, 275, and 276 each coordinate 3',3'-cGAMP.

This sequence belongs to the STING family.

It localises to the membrane. Its function is as follows. Facilitator of innate immune signaling that acts as a sensor of second messenger signals produced by cyclic GMP-AMP synthase-like receptors (cGLRs) and promotes the production of type I interferon. Innate immune response is triggered in response to nucleotides from viruses and bacteria delivered to the cytoplasm. Acts by binding cyclic dinucleotides: recognizes and binds cyclic 3'-3' linked cGAMP (3'-3'-cGAMP), cyclic di-AMP (3',3'-c-di-AMP) and cyclic di-GMP (3',3'-c-di-GMP) second messengers produced by cGLRs in response to nucleotides in the cytosol, such as double-stranded RNA (dsRNA). Upon binding to 3'-3'-cGAMP, 3',3'-c-di-AMP or 3',3'-c-di-GMP, oligomerizes and promotes the recruitment and subsequent activation of the transcription factor IRF3 to induce expression of type I interferon. The protein is Stimulator of interferon genes protein 3 of Stylophora pistillata (Smooth cauliflower coral).